The following is a 153-amino-acid chain: Ergochrome gene cluster protein CPUR_05425 (153 aa).

It functions in the pathway pigment biosynthesis. Part of the ergochrome gene cluster responsible for the typical purple-black color of the ergot sclerotia. The ergochrome gene cluster produces several ergot pigments including the yellow ergochrome secalonic acid and its derivatives, as well as the red anthraquinones endocrocin and clavorubin. The pathway begins with the synthesis of atrochrysone thioester by the polyketide synthase (PKS) CPUR_05437. The atrochrysone carboxyl ACP thioesterase CPUR_05436 then breaks the thioester bond and releases the atrochrysone carboxylic acid from CPUR_05437. The atrochrysone carboxylic acid is then converted to atrochrysone which is further transformed into emodin anthrone. The next step is performed by the anthrone oxygenase CPUR_05434 that catalyzes the oxidation of emodinanthrone to emodin. Emodin is further modified to yield monodictyphenone via several steps involving CPUR_05427, CPUR_05428, CPUR_05429 and CPUR_05430. The short chain dehydrogenase/reductase CPUR_05418 then catalyzes the C-5 ketoreduction to give the xanthone skeleton of the monomeric units. Ergochromes formation requires further dimerization steps of different xanthone units, probably catalyzed by the cytochrome P450 monooxygenase CPUR_05419. CPUR_05425, CPUR_05426 and CPUR_05431 are unique to Claviceps, thus it is likely that they are involved in further modification of xanthone units or in their dimerization. The yellow ergochromes and the red anthraquinone pigments endocrocin and clavorubin are products from the same PKS derived precursors and the latter are likely shunt products in the pathway of xanthone biosynthesis. It is proposed that atrochrysone carboxylic acid released from the PKS CPUR_05437 can also be converted to endocrocin anthrone which is further oxidized into endocrocin by CPUR_05435. Endocrocin could be then modified to clavorubin, possibly by CPUR_05423 and CPUR_05431. Clavorubin is the principal anthraquinone metabolite produced by the cluster with a much higher yield compared to endocrocin. The polypeptide is Ergochrome gene cluster protein CPUR_05425 (Claviceps purpurea (strain 20.1) (Ergot fungus)).